The following is a 301-amino-acid chain: Nitric oxide synthase-interacting protein (301 aa).

Ser36 is subject to Phosphoserine. The U-box-like stretch occupies residues 55–75 (DPVVTPDGYLYEREAILEYIL). The short motif at 78–101 (KREIARQVKAYEKQRGARREEQKE) is the Nuclear localization signal element. Residues 131 to 154 (PKAATLPNTEGEQPGPSVGPVGKD) form a disordered region.

This sequence belongs to the NOSIP family. In terms of assembly, interacts with NOS1 and NOS3. Interacts with PP2A holoenzyme, containing PPP2CA, PPP2CB, PPP2R1A and PPP2R2A subunits.

The protein localises to the cytoplasm. It localises to the nucleus. The enzyme catalyses S-ubiquitinyl-[E2 ubiquitin-conjugating enzyme]-L-cysteine + [acceptor protein]-L-lysine = [E2 ubiquitin-conjugating enzyme]-L-cysteine + N(6)-ubiquitinyl-[acceptor protein]-L-lysine.. It participates in protein modification; protein ubiquitination. In terms of biological role, E3 ubiquitin-protein ligase that is essential for proper development of the forebrain, the eye and the face. Catalyzes monoubiquitination of serine/threonine-protein phosphatase 2A (PP2A) catalytic subunit PPP2CA/PPP2CB. Negatively regulates nitric oxide production by inducing NOS1 and NOS3 translocation to actin cytoskeleton and inhibiting their enzymatic activity. This chain is Nitric oxide synthase-interacting protein (Nosip), found in Mus musculus (Mouse).